Here is a 418-residue protein sequence, read N- to C-terminus: Gamma-glutamyl phosphate reductase (418 aa).

It belongs to the gamma-glutamyl phosphate reductase family.

The protein resides in the cytoplasm. The catalysed reaction is L-glutamate 5-semialdehyde + phosphate + NADP(+) = L-glutamyl 5-phosphate + NADPH + H(+). Its pathway is amino-acid biosynthesis; L-proline biosynthesis; L-glutamate 5-semialdehyde from L-glutamate: step 2/2. Catalyzes the NADPH-dependent reduction of L-glutamate 5-phosphate into L-glutamate 5-semialdehyde and phosphate. The product spontaneously undergoes cyclization to form 1-pyrroline-5-carboxylate. This chain is Gamma-glutamyl phosphate reductase, found in Syntrophotalea carbinolica (strain DSM 2380 / NBRC 103641 / GraBd1) (Pelobacter carbinolicus).